The chain runs to 264 residues: Fibroblast growth factor 5 (264 aa).

An N-terminal signal peptide occupies residues 1-20 (MSLSLLFLIFCSHLIHSAWA). The segment at 25-81 (RLTPEGQPAPPRNPGDSSGSRGRSSATFSSSSASSPVAASPGSQGSGSEHSSFQWSP) is disordered. A compositionally biased stretch (low complexity) spans 38 to 72 (PGDSSGSRGRSSATFSSSSASSPVAASPGSQGSGS). A glycan (N-linked (GlcNAc...) asparagine) is linked at asparagine 108. Residues 227 to 254 (FTVTVPEKKKPPVKPKVPLSQPRRSPSP) are disordered.

It belongs to the heparin-binding growth factors family. Interacts with FGFR1 and FGFR2. Affinity between fibroblast growth factors (FGFs) and their receptors is increased by heparan sulfate glycosaminoglycans that function as coreceptors.

The protein resides in the secreted. Its function is as follows. Plays an important role in the regulation of cell proliferation and cell differentiation. Required for normal regulation of the hair growth cycle. Functions as an inhibitor of hair elongation by promoting progression from anagen, the growth phase of the hair follicle, into catagen the apoptosis-induced regression phase. This Mus musculus (Mouse) protein is Fibroblast growth factor 5 (Fgf5).